Consider the following 136-residue polypeptide: Small ribosomal subunit protein uS8c (136 aa).

This sequence belongs to the universal ribosomal protein uS8 family. Part of the 30S ribosomal subunit.

It is found in the plastid. The protein localises to the chloroplast. Functionally, one of the primary rRNA binding proteins, it binds directly to 16S rRNA central domain where it helps coordinate assembly of the platform of the 30S subunit. The sequence is that of Small ribosomal subunit protein uS8c (rps8) from Saccharum officinarum (Sugarcane).